Here is a 616-residue protein sequence, read N- to C-terminus: Chaperone protein HscA homolog (616 aa).

This sequence belongs to the heat shock protein 70 family.

Probable chaperone. Has a low intrinsic ATPase activity which is markedly stimulated by HscB. This is Chaperone protein HscA homolog from Vibrio cholerae serotype O1 (strain ATCC 39315 / El Tor Inaba N16961).